The sequence spans 156 residues: ATP synthase subunit b (156 aa).

A helical membrane pass occupies residues 7 to 27 (LIGQTVAFIIFVWFCMKFVWP).

It belongs to the ATPase B chain family. In terms of assembly, F-type ATPases have 2 components, F(1) - the catalytic core - and F(0) - the membrane proton channel. F(1) has five subunits: alpha(3), beta(3), gamma(1), delta(1), epsilon(1). F(0) has three main subunits: a(1), b(2) and c(10-14). The alpha and beta chains form an alternating ring which encloses part of the gamma chain. F(1) is attached to F(0) by a central stalk formed by the gamma and epsilon chains, while a peripheral stalk is formed by the delta and b chains.

The protein resides in the cell inner membrane. Its function is as follows. F(1)F(0) ATP synthase produces ATP from ADP in the presence of a proton or sodium gradient. F-type ATPases consist of two structural domains, F(1) containing the extramembraneous catalytic core and F(0) containing the membrane proton channel, linked together by a central stalk and a peripheral stalk. During catalysis, ATP synthesis in the catalytic domain of F(1) is coupled via a rotary mechanism of the central stalk subunits to proton translocation. Component of the F(0) channel, it forms part of the peripheral stalk, linking F(1) to F(0). The polypeptide is ATP synthase subunit b (Shewanella sp. (strain MR-4)).